The sequence spans 159 residues: 2-C-methyl-D-erythritol 2,4-cyclodiphosphate synthase (159 aa).

Residues D8 and H10 each coordinate a divalent metal cation. Residues 8-10 (DVH) and 34-35 (HS) each bind 4-CDP-2-C-methyl-D-erythritol 2-phosphate. H42 is an a divalent metal cation binding site. Residues 56 to 58 (DIG), 61 to 65 (FPDTD), 100 to 106 (AQAPKML), 132 to 135 (TTTE), F139, and R142 each bind 4-CDP-2-C-methyl-D-erythritol 2-phosphate.

This sequence belongs to the IspF family. As to quaternary structure, homotrimer. A divalent metal cation is required as a cofactor.

The catalysed reaction is 4-CDP-2-C-methyl-D-erythritol 2-phosphate = 2-C-methyl-D-erythritol 2,4-cyclic diphosphate + CMP. It participates in isoprenoid biosynthesis; isopentenyl diphosphate biosynthesis via DXP pathway; isopentenyl diphosphate from 1-deoxy-D-xylulose 5-phosphate: step 4/6. Its function is as follows. Involved in the biosynthesis of isopentenyl diphosphate (IPP) and dimethylallyl diphosphate (DMAPP), two major building blocks of isoprenoid compounds. Catalyzes the conversion of 4-diphosphocytidyl-2-C-methyl-D-erythritol 2-phosphate (CDP-ME2P) to 2-C-methyl-D-erythritol 2,4-cyclodiphosphate (ME-CPP) with a corresponding release of cytidine 5-monophosphate (CMP). This is 2-C-methyl-D-erythritol 2,4-cyclodiphosphate synthase from Klebsiella pneumoniae subsp. pneumoniae (strain ATCC 700721 / MGH 78578).